The following is a 637-amino-acid chain: Keratin, type II cytoskeletal 1 (637 aa).

A head region spans residues 1 to 187 (MSLQCSSRSL…DPQIQKVKSQ (187 aa)). Arg-12 bears the Omega-N-methylarginine mark. 2 positions are modified to phosphoserine: Ser-21 and Ser-24. At Arg-49 the chain carries Omega-N-methylarginine. Position 67 is a phosphoserine (Ser-67). Residues 180-328 (QIQKVKSQER…DIDFFSALYQ (149 aa)) adopt a coiled-coil conformation. A coil 1A region spans residues 188–223 (EREQIKSLNDKFASFIDKVRFLEQQNQVLQTKWELL). Positions 188–501 (EREQIKSLND…KLLEGEEIRM (314 aa)) constitute an IF rod domain. The segment at 224 to 243 (QQVDTTTRTQNLDPFFENYI) is linker 1. The segment at 244 to 334 (SILRRKVDSL…ALYQMEMSQM (91 aa)) is coil 1B. Lys-284 bears the N6,N6-dimethyllysine mark. Residues 335-358 (QTQISETNVVLSMDNNRSLDLDGI) form a linker 12 region. Ser-352 carries the post-translational modification Phosphoserine. The coil 2 stretch occupies residues 359–497 (ISEVKAQYDS…ATYKKLLEGE (139 aa)). Residues 397 to 483 (DSVRNTKMEI…QELMNTKLAL (87 aa)) adopt a coiled-coil conformation. The tail stretch occupies residues 498–637 (EIRMSGECTP…VSTSYSRGTK (140 aa)). Disordered regions lie at residues 505–533 (CTPN…SGGG) and 563–637 (YGGG…RGTK). Residues 509–524 (VSVSVSTSHTSMSGSS) show a composition bias toward low complexity. 3 positions are modified to omega-N-methylarginine: Arg-526, Arg-585, and Arg-607. The span at 563–618 (YGGGSGGGSYGGGSGGGSSGSHRGGSGGGGGSSGGSYGGSSGGGRGGSSSGGGGVK) shows a compositional bias: gly residues. Positions 624–637 (TVKFVSTSYSRGTK) are enriched in polar residues.

This sequence belongs to the intermediate filament family. As to quaternary structure, heterotetramer of two type I and two type II keratins. Heterodimer with KRT10. Two heterodimers of KRT1 and KRT10 form a heterotetramer. Forms a heterodimer with KRT14; the interaction is more abundant in the absence of KRT5. Interacts with PLEC isoform 1C, when in a heterodimer with KRT10. Interacts with ITGB1 in the presence of RACK1 and SRC, and with RACK1. Interacts with C1QBP; the association represents a cell surface kininogen receptor. Interacts with EPPK1; interaction is dependent of higher-order structure of intermediate filament. In terms of processing, undergoes deimination of some arginine residues (citrullination). In terms of tissue distribution, expressed in the infundibular regions of the ear, the interfollicular epidermis of the back, in the interscale regions containing hair follicles in the tail, and in the soles of the footpads (at protein level).

It localises to the cell membrane. The protein resides in the cytoplasm. Functionally, may regulate the activity of kinases such as PKC and SRC via binding to integrin beta-1 (ITB1) and the receptor of activated protein C kinase 1 (RACK1). In complex with C1QBP is a high affinity receptor for kininogen-1/HMWK. This Mus musculus (Mouse) protein is Keratin, type II cytoskeletal 1 (Krt1).